A 503-amino-acid chain; its full sequence is MLRVDQTGTILIKNGTVVNDDRYFKSDVLVENGIIKEISKNIEPKEGIKVVDATDKLLLPGGIDTHTHFQLPFMGTVSVDDFDIGTQAAVAGGTTFIIDFVIPTRGQSLLEAYDQWKKWADEKVNCDYSLHVAITWWSEQVSREMEILVKERGVNSFKCFMAYKNSFMVTDQEMYHIFKRCKELGAIAQVHAENGDMVFEGQKKMLEMGITGPEGHELSRPEALEAEATNRAIVIADSVCTPVYIVHVQSIGAADVICKHRKEGVRVYGEPIAAGLGVDGSHMWNHDWRHAAAFVMGPPIRPDPRTKGVLMDYLARGDLDCVGTDNCTFCADQKAMGKDDFTKIPNGVNGVEDRMSIVWENGVNTGKLTWCQFVRATSSEAARIFNIYPRKGRIDVGCDGDIVIWDPNQSKTISKDTHHHAVDFNIFEGIKVTGIAVTTIVAGNIVWSDNKLSCVKGSGRFVPRPPFGPVFDGIEQRDKVRNELLRKVDRKPYEDDNTKNSSK.

His66, His68, and Lys158 together coordinate Zn(2+). Lys158 is subject to N6-carboxylysine. Substrate is bound at residue Tyr163. Zn(2+) contacts are provided by His191, His247, and Asp325. Residue Asn346 coordinates substrate.

Belongs to the metallo-dependent hydrolases superfamily. Hydantoinase/dihydropyrimidinase family. Homotetramer. Zn(2+) serves as cofactor. Post-translationally, carboxylation allows a single lysine to coordinate two zinc ions.

It carries out the reaction 5,6-dihydrouracil + H2O = 3-(carbamoylamino)propanoate + H(+). Its function is as follows. Catalyzes the second step of the reductive pyrimidine degradation, the reversible hydrolytic ring opening of dihydropyrimidines. Can catalyze the ring opening of 5,6-dihydrouracil to N-carbamyl-alanine and of 5,6-dihydrothymine to N-carbamyl-amino isobutyrate. The chain is Dihydropyrimidinase (pyd2) from Dictyostelium discoideum (Social amoeba).